We begin with the raw amino-acid sequence, 362 residues long: Tyrosine-protein kinase SRK2 (362 aa).

An SH2 domain is found at 1-70 (TFLVRESESK…GLCVNLRQPC (70 aa)). The Protein kinase domain occupies 95–348 (ITLIRKLGAG…ALQWRLEDFF (254 aa)). ATP contacts are provided by residues 101–109 (LGAGQFGEV) and lysine 123. Residue aspartate 214 is the Proton acceptor of the active site.

This sequence belongs to the protein kinase superfamily. Tyr protein kinase family.

It is found in the cytoplasm. It catalyses the reaction L-tyrosyl-[protein] + ATP = O-phospho-L-tyrosyl-[protein] + ADP + H(+). This Spongilla lacustris (Freshwater sponge) protein is Tyrosine-protein kinase SRK2 (SRK2).